Consider the following 197-residue polypeptide: Rac-like GTP-binding protein ARAC6 (197 aa).

13–20 (GDGAVGKT) is a binding site for GTP. An Effector region motif is present at residues 35 to 43 (YVPTVFDNF). Residues 60–64 (DTAGQ) and 118–121 (TKLD) each bind GTP. GDP is bound at residue Ser-160. A Cysteine methyl ester modification is found at Cys-194. The S-geranylgeranyl cysteine moiety is linked to residue Cys-194. The propeptide at 195 to 197 (SIL) is removed in mature form.

Belongs to the small GTPase superfamily. Rho family. In terms of assembly, interacts with SPK1. Ubiquitous. Preferentially expressed in mature pollen and pollen tubes.

It localises to the cytoplasm. Its subcellular location is the membrane. Functionally, may be involved in cell polarity control during the actin-dependent tip growth of pollen tubes. Its function is as follows. Inactive GDP-bound Rho GTPases reside in the cytosol, are found in a complex with Rho GDP-dissociation inhibitors (Rho GDIs), and are released from the GDI protein in order to translocate to membranes upon activation. The chain is Rac-like GTP-binding protein ARAC6 (ARAC6) from Arabidopsis thaliana (Mouse-ear cress).